Reading from the N-terminus, the 364-residue chain is Lipoyl synthase, mitochondrial (364 aa).

The disordered stretch occupies residues 34–53 (PNFQDFIQNSDNSKDDFENY). Residues cysteine 99, cysteine 104, cysteine 110, cysteine 130, cysteine 134, cysteine 137, and serine 345 each contribute to the [4Fe-4S] cluster site. The region spanning 115–334 (EHGTQTATIM…EQRGNELGFL (220 aa)) is the Radical SAM core domain.

This sequence belongs to the radical SAM superfamily. Lipoyl synthase family. [4Fe-4S] cluster is required as a cofactor.

It localises to the mitochondrion. The enzyme catalyses [[Fe-S] cluster scaffold protein carrying a second [4Fe-4S](2+) cluster] + N(6)-octanoyl-L-lysyl-[protein] + 2 oxidized [2Fe-2S]-[ferredoxin] + 2 S-adenosyl-L-methionine + 4 H(+) = [[Fe-S] cluster scaffold protein] + N(6)-[(R)-dihydrolipoyl]-L-lysyl-[protein] + 4 Fe(3+) + 2 hydrogen sulfide + 2 5'-deoxyadenosine + 2 L-methionine + 2 reduced [2Fe-2S]-[ferredoxin]. It functions in the pathway protein modification; protein lipoylation via endogenous pathway; protein N(6)-(lipoyl)lysine from octanoyl-[acyl-carrier-protein]: step 2/2. Its function is as follows. Catalyzes the radical-mediated insertion of two sulfur atoms into the C-6 and C-8 positions of the octanoyl moiety bound to the lipoyl domains of lipoate-dependent enzymes, thereby converting the octanoylated domains into lipoylated derivatives. The protein is Lipoyl synthase, mitochondrial of Drosophila grimshawi (Hawaiian fruit fly).